A 190-amino-acid polypeptide reads, in one-letter code: Adenylate kinase (190 aa).

11 to 16 (GAGKGT) is a binding site for ATP. The tract at residues 31–60 (STGDIFRFNIKNETELGKLAKTFMDKGDLV) is NMP. AMP-binding positions include Thr32, Arg37, 58–60 (DLV), 86–89 (GFPR), and Gln93. The segment at 127–137 (ERGKTSGRVDD) is LID. An ATP-binding site is contributed by Arg128. Arg134 and Arg146 together coordinate AMP. Gly174 is an ATP binding site.

It belongs to the adenylate kinase family. In terms of assembly, monomer.

It localises to the cytoplasm. It carries out the reaction AMP + ATP = 2 ADP. Its pathway is purine metabolism; AMP biosynthesis via salvage pathway; AMP from ADP: step 1/1. Its function is as follows. Catalyzes the reversible transfer of the terminal phosphate group between ATP and AMP. Plays an important role in cellular energy homeostasis and in adenine nucleotide metabolism. This is Adenylate kinase from Flavobacterium psychrophilum (strain ATCC 49511 / DSM 21280 / CIP 103535 / JIP02/86).